Consider the following 197-residue polypeptide: Recombination protein RecR (197 aa).

The segment at Cys-54–Cys-69 adopts a C4-type zinc-finger fold. The Toprim domain occupies Thr-77–Pro-172.

This sequence belongs to the RecR family.

In terms of biological role, may play a role in DNA repair. It seems to be involved in an RecBC-independent recombinational process of DNA repair. It may act with RecF and RecO. This chain is Recombination protein RecR, found in Legionella pneumophila (strain Paris).